Here is a 1908-residue protein sequence, read N- to C-terminus: Putative ankyrin repeat protein L484 (1908 aa).

ANK repeat units lie at residues 20–50 (DIME…KFNI), 60–97 (PNKT…PMDL), 101–130 (DNVW…SIDR), 134–167 (SNNT…DIDK), and 1370–1399 (DGNT…NPFT). Residues 1539-1603 (VQLLNPKLRD…QTNISDLEFK (65 aa)) are a coiled coil.

The protein localises to the virion. The polypeptide is Putative ankyrin repeat protein L484 (Acanthamoeba polyphaga mimivirus (APMV)).